The primary structure comprises 76 residues: UPF0248 protein MmarC7_1289 (76 aa).

Belongs to the UPF0248 family.

The protein is UPF0248 protein MmarC7_1289 of Methanococcus maripaludis (strain C7 / ATCC BAA-1331).